The sequence spans 128 residues: Small ribosomal subunit protein uS9 (128 aa).

Residues 107–128 are disordered; that stretch reads RAVERKKPGRPKARKRFQFSKR. The span at 113 to 128 shows a compositional bias: basic residues; that stretch reads KPGRPKARKRFQFSKR.

The protein belongs to the universal ribosomal protein uS9 family.

This Parabacteroides distasonis (strain ATCC 8503 / DSM 20701 / CIP 104284 / JCM 5825 / NCTC 11152) protein is Small ribosomal subunit protein uS9.